We begin with the raw amino-acid sequence, 496 residues long: Cytochrome P450 71D181 (496 aa).

Residues 1 to 21 (MDISILWVAIILVISSYFIFM) traverse the membrane as a helical; Signal-anchor for type II membrane protein segment. Position 435 (Cys435) interacts with heme. The tract at residues 471-496 (MSETPGLSGPRKNPLIMVPTIHNPTS) is disordered.

The protein belongs to the cytochrome P450 family. The cofactor is heme.

The protein resides in the membrane. It carries out the reaction gamma-terpinene + 2 reduced [NADPH--hemoprotein reductase] + 2 O2 = carvacrol + 2 oxidized [NADPH--hemoprotein reductase] + 3 H2O + 2 H(+). It catalyses the reaction (4S)-limonene + reduced [NADPH--hemoprotein reductase] + O2 = (1S,5R)-carveol + oxidized [NADPH--hemoprotein reductase] + H2O + H(+). The enzyme catalyses (4R)-limonene + reduced [NADPH--hemoprotein reductase] + O2 = (1R,5S)-carveol + oxidized [NADPH--hemoprotein reductase] + H2O + H(+). The catalysed reaction is alpha-terpinene + 2 reduced [NADPH--hemoprotein reductase] + 2 O2 = carvacrol + 2 oxidized [NADPH--hemoprotein reductase] + 3 H2O + 2 H(+). Its pathway is secondary metabolite biosynthesis; terpenoid biosynthesis. Involved in the biosynthesis of phenolic monoterpenes natural products thymol and carvacrol which have a broad range of biological activities acting as antimicrobial compounds, insecticides, antioxidants and pharmaceutical agents. Catalyzes the C2-hydroxylation of gamma-terpinene and alpha-terpinene to produce carvacrol. Also mediates the C6-hydroxylation of (4S)-limonene and (4R)-limonene to form carveol. This Thymus vulgaris (Thyme) protein is Cytochrome P450 71D181.